Reading from the N-terminus, the 173-residue chain is Putative C-type lectin protein FPV198 (173 aa).

The 120-residue stretch at 50-169 (GMSGWVQINN…CNKKHTGICF (120 aa)) folds into the C-type lectin domain.

The chain is Putative C-type lectin protein FPV198 from Vertebrata (FPV).